The chain runs to 249 residues: Small ribosomal subunit protein eS6 (249 aa).

Residues 216 to 229 (RMKEAKEKRQEQIA) are compositionally biased toward basic and acidic residues. The disordered stretch occupies residues 216–249 (RMKEAKEKRQEQIAKRRRLSSLRASTSKSESSQK). 5 positions are modified to phosphoserine: Ser-235, Ser-236, Ser-240, Ser-244, and Ser-247. Over residues 236 to 249 (SLRASTSKSESSQK) the composition is skewed to low complexity.

It belongs to the eukaryotic ribosomal protein eS6 family. Component of the small ribosomal subunit. Part of the small subunit (SSU) processome, composed of more than 70 proteins and the RNA chaperone small nucleolar RNA (snoRNA) U3. In terms of processing, ribosomal protein S6 is the major substrate of protein kinases in eukaryote ribosomes. The phosphorylation is stimulated by growth factors, tumor promoting agents, and mitogens. It is dephosphorylated at growth arrest.

The protein resides in the cytoplasm. It is found in the nucleus. The protein localises to the nucleolus. Its function is as follows. Component of the 40S small ribosomal subunit. Plays an important role in controlling cell growth and proliferation through the selective translation of particular classes of mRNA. Part of the small subunit (SSU) processome, first precursor of the small eukaryotic ribosomal subunit. During the assembly of the SSU processome in the nucleolus, many ribosome biogenesis factors, an RNA chaperone and ribosomal proteins associate with the nascent pre-rRNA and work in concert to generate RNA folding, modifications, rearrangements and cleavage as well as targeted degradation of pre-ribosomal RNA by the RNA exosome. The sequence is that of Small ribosomal subunit protein eS6 (RPS6) from Gallus gallus (Chicken).